The following is a 70-amino-acid chain: Large ribosomal subunit protein bL31 (70 aa).

The Zn(2+) site is built by Cys-16, Cys-18, Cys-38, and Cys-41.

The protein belongs to the bacterial ribosomal protein bL31 family. Type A subfamily. In terms of assembly, part of the 50S ribosomal subunit. Zn(2+) serves as cofactor.

Its function is as follows. Binds the 23S rRNA. This chain is Large ribosomal subunit protein bL31, found in Bifidobacterium longum (strain DJO10A).